A 332-amino-acid chain; its full sequence is Small ribosomal subunit protein uS2 (332 aa).

It belongs to the universal ribosomal protein uS2 family.

The polypeptide is Small ribosomal subunit protein uS2 (Nitrobacter winogradskyi (strain ATCC 25391 / DSM 10237 / CIP 104748 / NCIMB 11846 / Nb-255)).